A 160-amino-acid polypeptide reads, in one-letter code: Major pollen allergen Bet v 1-J (160 aa).

Residues Lys-55, Tyr-82, Tyr-84, and Asn-101 each coordinate brassinolide. Hydrophobic ligand pocket stretches follow at residues 116–118 and 133–141; these read KIN and QIKASKEMG.

Belongs to the BetVI family. In terms of tissue distribution, pollen.

The protein localises to the cytoplasm. In terms of biological role, may be a general steroid carrier protein. This chain is Major pollen allergen Bet v 1-J, found in Betula pendula (European white birch).